Consider the following 792-residue polypeptide: Phenylalanine--tRNA ligase beta subunit (792 aa).

In terms of domain architecture, tRNA-binding spans 39–147 (AAAFSGVVVG…DNAPIGQDIR (109 aa)). In terms of domain architecture, B5 spans 400–475 (PERPAVRLRP…RLHGYDAIPA (76 aa)). Mg(2+)-binding residues include Asp453, Asp459, Glu462, and Glu463. In terms of domain architecture, FDX-ACB spans 698 to 791 (SRQPAVTRDV…TETSLGARLR (94 aa)).

Belongs to the phenylalanyl-tRNA synthetase beta subunit family. Type 1 subfamily. In terms of assembly, tetramer of two alpha and two beta subunits. The cofactor is Mg(2+).

The protein localises to the cytoplasm. It catalyses the reaction tRNA(Phe) + L-phenylalanine + ATP = L-phenylalanyl-tRNA(Phe) + AMP + diphosphate + H(+). The sequence is that of Phenylalanine--tRNA ligase beta subunit from Aromatoleum aromaticum (strain DSM 19018 / LMG 30748 / EbN1) (Azoarcus sp. (strain EbN1)).